A 173-amino-acid chain; its full sequence is Protein-export protein SecB (173 aa).

It belongs to the SecB family. In terms of assembly, homotetramer, a dimer of dimers. One homotetramer interacts with 1 SecA dimer.

The protein localises to the cytoplasm. In terms of biological role, one of the proteins required for the normal export of preproteins out of the cell cytoplasm. It is a molecular chaperone that binds to a subset of precursor proteins, maintaining them in a translocation-competent state. It also specifically binds to its receptor SecA. This is Protein-export protein SecB from Ralstonia nicotianae (strain ATCC BAA-1114 / GMI1000) (Ralstonia solanacearum).